The primary structure comprises 137 residues: Small ribosomal subunit protein uS9 (137 aa).

It belongs to the universal ribosomal protein uS9 family.

The sequence is that of Small ribosomal subunit protein uS9 from Picosynechococcus sp. (strain ATCC 27264 / PCC 7002 / PR-6) (Agmenellum quadruplicatum).